The primary structure comprises 343 residues: UDP-3-O-acylglucosamine N-acyltransferase (343 aa).

Catalysis depends on His245, which acts as the Proton acceptor.

The protein belongs to the transferase hexapeptide repeat family. LpxD subfamily. As to quaternary structure, homotrimer.

The enzyme catalyses a UDP-3-O-[(3R)-3-hydroxyacyl]-alpha-D-glucosamine + a (3R)-hydroxyacyl-[ACP] = a UDP-2-N,3-O-bis[(3R)-3-hydroxyacyl]-alpha-D-glucosamine + holo-[ACP] + H(+). The protein operates within bacterial outer membrane biogenesis; LPS lipid A biosynthesis. Functionally, catalyzes the N-acylation of UDP-3-O-acylglucosamine using 3-hydroxyacyl-ACP as the acyl donor. Is involved in the biosynthesis of lipid A, a phosphorylated glycolipid that anchors the lipopolysaccharide to the outer membrane of the cell. This chain is UDP-3-O-acylglucosamine N-acyltransferase, found in Phenylobacterium zucineum (strain HLK1).